The sequence spans 122 residues: Large ribosomal subunit protein uL14 (122 aa).

It belongs to the universal ribosomal protein uL14 family. In terms of assembly, part of the 50S ribosomal subunit. Forms a cluster with proteins L3 and L19. In the 70S ribosome, L14 and L19 interact and together make contacts with the 16S rRNA in bridges B5 and B8.

Its function is as follows. Binds to 23S rRNA. Forms part of two intersubunit bridges in the 70S ribosome. The chain is Large ribosomal subunit protein uL14 from Geobacillus kaustophilus (strain HTA426).